The primary structure comprises 208 residues: Pyrophosphate-energized proton pump 2 (208 aa).

5 consecutive transmembrane segments (helical) span residues 19 to 39 (AYPL…TFFV), 54 to 74 (GLIV…SFTI), 89 to 109 (GGNL…IVVI), 140 to 160 (LAVS…GIIA), and 167 to 187 (LFGT…IVAL).

It belongs to the H(+)-translocating pyrophosphatase (TC 3.A.10) family. As to quaternary structure, homodimer. Requires Mg(2+) as cofactor.

The protein resides in the cell inner membrane. It carries out the reaction diphosphate + H2O + H(+)(in) = 2 phosphate + 2 H(+)(out). In terms of biological role, proton pump that utilizes the energy of pyrophosphate hydrolysis as the driving force for proton movement across the membrane. Generates a proton motive force. In Mycoplana dimorpha, this protein is Pyrophosphate-energized proton pump 2 (hppA2).